We begin with the raw amino-acid sequence, 290 residues long: Flap endonuclease Xni (290 aa).

D125 contacts Mg(2+). A 5'-3' exonuclease domain is found at 181–275; sequence VKTSQLIDFW…DIRLTTSSSA (95 aa). K(+)-binding residues include L192, V203, and I206. Positions 205 to 210 are interaction with DNA; that stretch reads GIGQVT.

The protein belongs to the Xni family. Requires Mg(2+) as cofactor. The cofactor is K(+).

Its function is as follows. Has flap endonuclease activity. During DNA replication, flap endonucleases cleave the 5'-overhanging flap structure that is generated by displacement synthesis when DNA polymerase encounters the 5'-end of a downstream Okazaki fragment. This chain is Flap endonuclease Xni, found in Colwellia psychrerythraea (strain 34H / ATCC BAA-681) (Vibrio psychroerythus).